Here is a 133-residue protein sequence, read N- to C-terminus: Transcriptional regulator MraZ (133 aa).

SpoVT-AbrB domains are found at residues 5-47 (TYEH…SKDD) and 76-119 (TVEI…SKNK).

Belongs to the MraZ family. As to quaternary structure, forms oligomers.

It is found in the cytoplasm. The protein resides in the nucleoid. In Mycoplasma mycoides subsp. mycoides SC (strain CCUG 32753 / NCTC 10114 / PG1), this protein is Transcriptional regulator MraZ.